Here is a 370-residue protein sequence, read N- to C-terminus: 3,7-dimethylxanthine N-methyltransferase CkTbS (370 aa).

An S-adenosyl-L-homocysteine-binding site is contributed by Tyr24. Thr31 is a theobromine binding site. The S-adenosyl-L-homocysteine site is built by Cys67, Asn72, Asp104, Leu105, Ser139, and Phe140. The theobromine site is built by Tyr157, His160, and Trp161. Asn178 contributes to the Mg(2+) binding site. His226 contributes to the theobromine binding site. Residues Asp264, Phe266, and Asn267 each contribute to the Mg(2+) site. Phe322 lines the theobromine pocket.

It belongs to the methyltransferase superfamily. Type-7 methyltransferase family. The cofactor is Mg(2+).

The enzyme catalyses 7-methylxanthine + S-adenosyl-L-methionine = theobromine + S-adenosyl-L-homocysteine + H(+). Its pathway is alkaloid biosynthesis. Functionally, involved in the biosynthesis of caffeine in cv. Puer. Involved in the biosynthesis of theacrine in cv. Kucha, a caffeine-like xanthine alkaloid with diverse beneficial biological activities including anti-depressive, sedative, and hypnotic activities, improving learning and memory, increasing exercise activity, and preventing nonalcoholic fatty liver disease. Catalyzes the conversion of 7-methylxanthine (7mX) to theobromine but not able to convert paraxanthine to caffeine. This Camellia sinensis var. assamica (Assam tea) protein is 3,7-dimethylxanthine N-methyltransferase CkTbS.